Consider the following 485-residue polypeptide: Anthranilate synthase component I-like protein (485 aa).

Residues S69 and 271–273 (PFA) each bind L-tryptophan. Chorismate is bound at residue 306–307 (GT). E333 is a Mg(2+) binding site. Residues R441, 455-457 (GAG), and G457 contribute to the chorismate site. Mg(2+) is bound at residue E470.

The protein belongs to the anthranilate synthase component I family. Tetramer of two components I and two components II. Mg(2+) is required as a cofactor.

The enzyme catalyses chorismate + L-glutamine = anthranilate + pyruvate + L-glutamate + H(+). It functions in the pathway amino-acid biosynthesis; L-tryptophan biosynthesis; L-tryptophan from chorismate: step 1/5. In Synechocystis sp. (strain ATCC 27184 / PCC 6803 / Kazusa), this protein is Anthranilate synthase component I-like protein (trpE2).